Here is a 182-residue protein sequence, read N- to C-terminus: Ribosome-recycling factor (182 aa).

This sequence belongs to the RRF family.

The protein localises to the cytoplasm. Functionally, responsible for the release of ribosomes from messenger RNA at the termination of protein biosynthesis. May increase the efficiency of translation by recycling ribosomes from one round of translation to another. The polypeptide is Ribosome-recycling factor (Gloeothece citriformis (strain PCC 7424) (Cyanothece sp. (strain PCC 7424))).